The primary structure comprises 615 residues: Chaperone protein DnaK (615 aa).

Position 175 is a phosphothreonine; by autocatalysis (Thr-175). A disordered region spans residues 573-615 (SQEMYQKAAQEQQAAQGAEQAQDNGPKDDNVVDADFKEVDEDK). Low complexity predominate over residues 580 to 594 (AAQEQQAAQGAEQAQ). The segment covering 597–609 (GPKDDNVVDADFK) has biased composition (basic and acidic residues).

The protein belongs to the heat shock protein 70 family.

Acts as a chaperone. The sequence is that of Chaperone protein DnaK from Clostridioides difficile (strain 630) (Peptoclostridium difficile).